We begin with the raw amino-acid sequence, 427 residues long: Enolase (427 aa).

Residue Gln163 coordinates (2R)-2-phosphoglycerate. Glu205 (proton donor) is an active-site residue. Asp242, Glu287, and Asp314 together coordinate Mg(2+). Positions 339, 368, 369, and 390 each coordinate (2R)-2-phosphoglycerate. Lys339 acts as the Proton acceptor in catalysis.

Belongs to the enolase family. Mg(2+) is required as a cofactor.

The protein localises to the cytoplasm. It is found in the secreted. It localises to the cell surface. The enzyme catalyses (2R)-2-phosphoglycerate = phosphoenolpyruvate + H2O. Its pathway is carbohydrate degradation; glycolysis; pyruvate from D-glyceraldehyde 3-phosphate: step 4/5. Catalyzes the reversible conversion of 2-phosphoglycerate (2-PG) into phosphoenolpyruvate (PEP). It is essential for the degradation of carbohydrates via glycolysis. The protein is Enolase of Solibacter usitatus (strain Ellin6076).